The following is a 729-amino-acid chain: Fatty acid oxidation complex subunit alpha (729 aa).

The segment at 1 to 189 is enoyl-CoA hydratase/isomerase; it reads MLYQSETLQL…KVGLVDAVVA (189 aa). D296 is a substrate binding site. The 3-hydroxyacyl-CoA dehydrogenase stretch occupies residues 311–729; sequence SAPKQAAVLG…LLDVSISQPA (419 aa). NAD(+) contacts are provided by residues M324, D343, 400–402, K407, and S429; that span reads VVE. Catalysis depends on H450, which acts as the For 3-hydroxyacyl-CoA dehydrogenase activity. N453 lines the NAD(+) pocket. Positions 500 and 660 each coordinate substrate.

In the N-terminal section; belongs to the enoyl-CoA hydratase/isomerase family. The protein in the C-terminal section; belongs to the 3-hydroxyacyl-CoA dehydrogenase family. Heterotetramer of two alpha chains (FadB) and two beta chains (FadA).

It carries out the reaction a (3S)-3-hydroxyacyl-CoA + NAD(+) = a 3-oxoacyl-CoA + NADH + H(+). The catalysed reaction is a (3S)-3-hydroxyacyl-CoA = a (2E)-enoyl-CoA + H2O. It catalyses the reaction a 4-saturated-(3S)-3-hydroxyacyl-CoA = a (3E)-enoyl-CoA + H2O. The enzyme catalyses (3S)-3-hydroxybutanoyl-CoA = (3R)-3-hydroxybutanoyl-CoA. It carries out the reaction a (3Z)-enoyl-CoA = a 4-saturated (2E)-enoyl-CoA. The catalysed reaction is a (3E)-enoyl-CoA = a 4-saturated (2E)-enoyl-CoA. The protein operates within lipid metabolism; fatty acid beta-oxidation. Involved in the aerobic and anaerobic degradation of long-chain fatty acids via beta-oxidation cycle. Catalyzes the formation of 3-oxoacyl-CoA from enoyl-CoA via L-3-hydroxyacyl-CoA. It can also use D-3-hydroxyacyl-CoA and cis-3-enoyl-CoA as substrate. The polypeptide is Fatty acid oxidation complex subunit alpha (Yersinia enterocolitica serotype O:8 / biotype 1B (strain NCTC 13174 / 8081)).